We begin with the raw amino-acid sequence, 176 residues long: ATP-dependent protease subunit HslV (176 aa).

Residue threonine 2 is part of the active site. The Na(+) site is built by alanine 157, cysteine 160, and threonine 163.

It belongs to the peptidase T1B family. HslV subfamily. As to quaternary structure, a double ring-shaped homohexamer of HslV is capped on each side by a ring-shaped HslU homohexamer. The assembly of the HslU/HslV complex is dependent on binding of ATP.

The protein resides in the cytoplasm. The catalysed reaction is ATP-dependent cleavage of peptide bonds with broad specificity.. Its activity is regulated as follows. Allosterically activated by HslU binding. Protease subunit of a proteasome-like degradation complex believed to be a general protein degrading machinery. The sequence is that of ATP-dependent protease subunit HslV from Buchnera aphidicola subsp. Schizaphis graminum (strain Sg).